The primary structure comprises 236 residues: Ubiquinone biosynthesis O-methyltransferase (236 aa).

S-adenosyl-L-methionine is bound by residues R39, G59, D80, and M124.

The protein belongs to the methyltransferase superfamily. UbiG/COQ3 family.

The enzyme catalyses a 3-demethylubiquinol + S-adenosyl-L-methionine = a ubiquinol + S-adenosyl-L-homocysteine + H(+). The catalysed reaction is a 3-(all-trans-polyprenyl)benzene-1,2-diol + S-adenosyl-L-methionine = a 2-methoxy-6-(all-trans-polyprenyl)phenol + S-adenosyl-L-homocysteine + H(+). Its pathway is cofactor biosynthesis; ubiquinone biosynthesis. In terms of biological role, O-methyltransferase that catalyzes the 2 O-methylation steps in the ubiquinone biosynthetic pathway. The sequence is that of Ubiquinone biosynthesis O-methyltransferase from Shewanella sp. (strain W3-18-1).